The chain runs to 335 residues: Nucleoid-associated protein SeAg_B2375 (335 aa).

The protein belongs to the YejK family.

It localises to the cytoplasm. It is found in the nucleoid. The sequence is that of Nucleoid-associated protein SeAg_B2375 from Salmonella agona (strain SL483).